A 127-amino-acid chain; its full sequence is Fatty acid-binding protein, liver (127 aa).

M1 carries the N-acetylmethionine modification. The residue at position 11 (S11) is a Phosphoserine. K31 and K36 each carry N6-succinyllysine. Residue S39 is modified to Phosphoserine. Residue K46 is modified to N6-succinyllysine. T51 carries the phosphothreonine modification. K57 and K78 each carry N6-succinyllysine. N6-acetyllysine; alternate is present on K84. K84 is modified (N6-succinyllysine; alternate). K90 carries the N6-succinyllysine modification. S100 carries the post-translational modification Phosphoserine. An N6-succinyllysine modification is found at K121.

This sequence belongs to the calycin superfamily. Fatty-acid binding protein (FABP) family.

The protein localises to the cytoplasm. Plays a role in lipoprotein-mediated cholesterol uptake in hepatocytes. Binds cholesterol. Binds free fatty acids and their coenzyme A derivatives, bilirubin, and some other small molecules in the cytoplasm. May be involved in intracellular lipid transport. This chain is Fatty acid-binding protein, liver (Fabp1), found in Mus musculus (Mouse).